Consider the following 334-residue polypeptide: Anthranilate phosphoribosyltransferase (334 aa).

Residues Gly81, 84-85, Thr89, 91-94, 109-117, and Ala121 each bind 5-phospho-alpha-D-ribose 1-diphosphate; these read GD, NIST, and KHGSRSVSS. Gly81 contributes to the anthranilate binding site. Mg(2+) is bound at residue Ser93. An anthranilate-binding site is contributed by Arg167. The Mg(2+) site is built by Asp225 and Glu226.

Belongs to the anthranilate phosphoribosyltransferase family. As to quaternary structure, homodimer. Mg(2+) is required as a cofactor.

The enzyme catalyses N-(5-phospho-beta-D-ribosyl)anthranilate + diphosphate = 5-phospho-alpha-D-ribose 1-diphosphate + anthranilate. It functions in the pathway amino-acid biosynthesis; L-tryptophan biosynthesis; L-tryptophan from chorismate: step 2/5. Catalyzes the transfer of the phosphoribosyl group of 5-phosphorylribose-1-pyrophosphate (PRPP) to anthranilate to yield N-(5'-phosphoribosyl)-anthranilate (PRA). The protein is Anthranilate phosphoribosyltransferase of Actinobacillus pleuropneumoniae serotype 7 (strain AP76).